Reading from the N-terminus, the 542-residue chain is MHGSGHSLTGAPHQIPPPRTQGAATGGQQLSATANQFVDKIDPFHNKRGTSRRLRINNSSRYNVDSAQELVQLALIKDTAANEQPALVIEKLVQCQHVFDFYDPVAQLKCKEIKRAALNELIDHITSTKGAIVETIYPAVIKMVAKNIFRVLPPSENCEFDPEEDEPTLEVSWPHLQLVYELFLRFLESPDFQASIGKKYIDQRFVLKLLDLFDSEDPRERDFLKTVLHRIYGKFLGLRAFIRKHINNMFLRFVYETDSFNGVGELLEILGSIINGFALPLKQEHKVFLVKVLLPLHKPKCLSLYHAQLAYCVVQFIEKDSSLTPQVFEALLKFWPRTCSSKEVMFLGEVEEILDIIEPEQFKKIIDPLFRQLAKCVSSPHFQVAERALYFWNNEYILSLIEDTSSLVMPIMFPALYRISKEHWNQTIVALVYNVLKTFMEMNGKLFDELTSTYKGERLREKQREKDRDAFWKKMEALELNPPAEGKEVTPSLFPEKLTDYLKKDGPNMTPLPVATAGGGDKSPSVVKKSSTGSETTTPAKK.

Disordered regions lie at residues 1–28 (MHGS…TGGQ) and 500–542 (DYLK…PAKK). Over residues 528–542 (KKSSTGSETTTPAKK) the composition is skewed to polar residues.

The protein belongs to the phosphatase 2A regulatory subunit B56 family. As to quaternary structure, part of a complex consisting of a common heterodimeric core enzyme, composed of catalytic subunit let-92 and constant regulatory subunit paa-1, that associates with a variety of regulatory subunits which confer distinct properties to the holoenzyme. Interacts with akt-1 but not akt-2. Interacts with sgk-1. Interacts with P granule components meg-1, meg-3 and meg-4. In terms of tissue distribution, expressed in pharynx, vulva and spermatheca.

It is found in the cytoplasm. Probable regulatory subunit of serine/threonine-protein phosphatase let-92 which negatively regulates the insulin receptor signaling cascade composed of daf-2, age-1, akt-1, akt-2 and sgk-1 by promoting the dephosphorylation of akt-1 on 'Thr-350'. Negatively regulates several functions controlled by the insulin pathway including dauer formation, lifespan, fat storage and stress resistance. Plays a role in the asymmetric segregation of the P granule components during embryonic cell divisions but does not play an essential role in specifying germ cell fate. Within a PP2A phosphatase complex, acts redundantly with pptr-2, to dephosphorylate P granule components including meg-1 and meg-3 to promote the assembly and accumulation of zygotic P granules in the posterior cytoplasm during zygote polarization, and thus maintain P granule distribution and segregation in early stage embryos following meiosis. In adults, required to promote germ cell proliferation and differentiation when exposed to thermic stress. This chain is Serine/threonine-protein phosphatase 2A regulatory subunit pptr-1, found in Caenorhabditis elegans.